Reading from the N-terminus, the 128-residue chain is Ferric uptake regulation protein homolog (128 aa).

It belongs to the Fur family.

The sequence is that of Ferric uptake regulation protein homolog from Archaeoglobus fulgidus (strain ATCC 49558 / DSM 4304 / JCM 9628 / NBRC 100126 / VC-16).